A 237-amino-acid chain; its full sequence is Indole-3-glycerol phosphate synthase (237 aa).

It belongs to the TrpC family.

The catalysed reaction is 1-(2-carboxyphenylamino)-1-deoxy-D-ribulose 5-phosphate + H(+) = (1S,2R)-1-C-(indol-3-yl)glycerol 3-phosphate + CO2 + H2O. Its pathway is amino-acid biosynthesis; L-tryptophan biosynthesis; L-tryptophan from chorismate: step 4/5. This is Indole-3-glycerol phosphate synthase (trpC) from Thermoplasma acidophilum (strain ATCC 25905 / DSM 1728 / JCM 9062 / NBRC 15155 / AMRC-C165).